A 261-amino-acid chain; its full sequence is ATP synthase subunit a (261 aa).

A run of 6 helical transmembrane segments spans residues isoleucine 45–leucine 65, valine 107–phenylalanine 127, methionine 133–methionine 153, methionine 162–isoleucine 182, isoleucine 209–isoleucine 229, and leucine 232–leucine 252.

This sequence belongs to the ATPase A chain family. F-type ATPases have 2 components, CF(1) - the catalytic core - and CF(0) - the membrane proton channel. CF(1) has five subunits: alpha(3), beta(3), gamma(1), delta(1), epsilon(1). CF(0) has four main subunits: a, b, b' and c.

Its subcellular location is the cell inner membrane. Functionally, key component of the proton channel; it plays a direct role in the translocation of protons across the membrane. The polypeptide is ATP synthase subunit a (Cereibacter sphaeroides (strain ATCC 17025 / ATH 2.4.3) (Rhodobacter sphaeroides)).